The following is a 65-amino-acid chain: Photosystem II reaction center protein J (65 aa).

Basic and acidic residues predominate over residues 1–18 (MSSKLKGPDGRLPDRLPD). The segment at 1 to 21 (MSSKLKGPDGRLPDRLPDGRP) is disordered. A helical transmembrane segment spans residues 36 to 56 (LWLVATAGGIAVIFVLGIFFY).

Belongs to the PsbJ family. As to quaternary structure, PSII is composed of 1 copy each of membrane proteins PsbA, PsbB, PsbC, PsbD, PsbE, PsbF, PsbH, PsbI, PsbJ, PsbK, PsbL, PsbM, PsbT, PsbX, PsbY, Psb30/Ycf12, peripheral proteins PsbO, CyanoQ (PsbQ), PsbU, PsbV and a large number of cofactors. It forms dimeric complexes.

The protein localises to the cellular thylakoid membrane. One of the components of the core complex of photosystem II (PSII). PSII is a light-driven water:plastoquinone oxidoreductase that uses light energy to abstract electrons from H(2)O, generating O(2) and a proton gradient subsequently used for ATP formation. It consists of a core antenna complex that captures photons, and an electron transfer chain that converts photonic excitation into a charge separation. The chain is Photosystem II reaction center protein J from Prochlorococcus marinus (strain SARG / CCMP1375 / SS120).